We begin with the raw amino-acid sequence, 359 residues long: Fructose-bisphosphate aldolase class 2 (359 aa).

D-glyceraldehyde 3-phosphate is bound at residue Ser50. Residue Asp83 is the Proton donor of the active site. His84, Asp105, Glu142, and His198 together coordinate Zn(2+). Residue Gly199 participates in dihydroxyacetone phosphate binding. Residue His232 coordinates Zn(2+). Dihydroxyacetone phosphate contacts are provided by residues 233–235 and 275–278; these read GSS and NIDT.

Belongs to the class II fructose-bisphosphate aldolase family. Requires Zn(2+) as cofactor.

It carries out the reaction beta-D-fructose 1,6-bisphosphate = D-glyceraldehyde 3-phosphate + dihydroxyacetone phosphate. The protein operates within carbohydrate degradation; glycolysis; D-glyceraldehyde 3-phosphate and glycerone phosphate from D-glucose: step 4/4. In terms of biological role, catalyzes the aldol condensation of dihydroxyacetone phosphate (DHAP or glycerone-phosphate) with glyceraldehyde 3-phosphate (G3P) to form fructose 1,6-bisphosphate (FBP) in gluconeogenesis and the reverse reaction in glycolysis. The sequence is that of Fructose-bisphosphate aldolase class 2 (fbaA) from Synechocystis sp. (strain ATCC 27184 / PCC 6803 / Kazusa).